We begin with the raw amino-acid sequence, 181 residues long: Cyclic AMP-dependent transcription factor ATF-3 (181 aa).

The disordered stretch occupies residues 73–97; the sequence is EMSVTKSEAAPEEDERKRRRRERNK. Lys-78 participates in a covalent cross-link: Glycyl lysine isopeptide (Lys-Gly) (interchain with G-Cter in SUMO2). The 64-residue stretch at 86 to 149 folds into the bZIP domain; it reads DERKRRRRER…QHLIYMLNLH (64 aa). Residues 88-110 form a basic motif region; sequence RKRRRRERNKIAAAKCRNKKKEK. Positions 114-142 are leucine-zipper; sequence LQKESEKLESVNAELKAQIEELKNEKQHL. At Thr-162 the chain carries Phosphothreonine. A Glycyl lysine isopeptide (Lys-Gly) (interchain with G-Cter in SUMO2) cross-link involves residue Lys-175.

The protein belongs to the bZIP family. ATF subfamily. In terms of assembly, binds DNA as a homodimer or a heterodimer. Interacts with KAT5; promoting KAT5 autoacetylation and KAT5 deubiquitination by USP7.

It localises to the nucleus. Functionally, this protein binds the cAMP response element (CRE) (consensus: 5'-GTGACGT[AC][AG]-3'), a sequence present in many viral and cellular promoters. Represses transcription from promoters with ATF sites. It may repress transcription by stabilizing the binding of inhibitory cofactors at the promoter. This chain is Cyclic AMP-dependent transcription factor ATF-3, found in Mus musculus (Mouse).